Consider the following 418-residue polypeptide: Putative L-glutamine:3-amino-2,3-dideoxy-scyllo-inosose aminotransferase (418 aa).

The residue at position 199 (Lys199) is an N6-(pyridoxal phosphate)lysine.

The protein belongs to the DegT/DnrJ/EryC1 family. L-glutamine:2-deoxy-scyllo-inosose/scyllo-inosose aminotransferase subfamily. It depends on pyridoxal 5'-phosphate as a cofactor.

It carries out the reaction 3-amino-2,3-dideoxy-scyllo-inosose + L-glutamine = 2-deoxystreptamine + 2-oxoglutaramate. Its pathway is metabolic intermediate biosynthesis; 2-deoxystreptamine biosynthesis; 2-deoxystreptamine from D-glucose 6-phosphate: step 4/4. It participates in antibiotic biosynthesis; gentamicin biosynthesis. Functionally, catalyzes the transamination of 3-amino-2,3-dideoxy-scyllo-inosose (amino-DOI) into 2-deoxystreptamine (DOS). The chain is Putative L-glutamine:3-amino-2,3-dideoxy-scyllo-inosose aminotransferase (gtmD) from Micromonospora echinospora (Micromonospora purpurea).